A 168-amino-acid chain; its full sequence is MVEDILAPGLRVVFCGINPGLSSAGTGFPFAHPANRFWKVIYQAGFTDRQLKPQEAQHLLDYRCGVTKLVDRPTVQANEVSKQELHAGGRKLIEKIEDYQPQALAILGKQAYEQGFSQRGAQWGKQTLTIGSTQIWVLPNPSGLSRVSLEKLVEAYRELDQALVVRGR.

It belongs to the uracil-DNA glycosylase (UDG) superfamily. TDG/mug family. In terms of assembly, binds DNA as a monomer.

The protein localises to the cytoplasm. It catalyses the reaction Specifically hydrolyzes mismatched double-stranded DNA and polynucleotides, releasing free uracil.. Functionally, excises ethenocytosine and uracil, which can arise by alkylation or deamination of cytosine, respectively, from the corresponding mispairs with guanine in ds-DNA. It is capable of hydrolyzing the carbon-nitrogen bond between the sugar-phosphate backbone of the DNA and the mispaired base. The complementary strand guanine functions in substrate recognition. Required for DNA damage lesion repair in stationary-phase cells. This is G/U mismatch-specific DNA glycosylase from Escherichia coli (strain UTI89 / UPEC).